We begin with the raw amino-acid sequence, 439 residues long: Acyl transferase 4 (439 aa).

Active-site proton acceptor residues include His-166 and Asp-382.

The protein belongs to the plant acyltransferase family.

Functionally, grass-specific monolignol p-coumaroyl transferase involved in the biosynthesis of acylated monolignols or monolignol conjugates that serve as monomer precursors of lignin. Can synthesize sinapyl p-coumarate, p-coumaryl p-coumarate, sinapyl caffeate and p-coumaryl caffeate in vitro. The protein is Acyl transferase 4 of Oryza sativa subsp. japonica (Rice).